The chain runs to 446 residues: Adenylosuccinate synthetase (446 aa).

Residues G12–K18 and G40–T42 contribute to the GTP site. Catalysis depends on D13, which acts as the Proton acceptor. Mg(2+)-binding residues include D13 and G40. Residues D13–K16, N38–H41, T128, R142, Q223, T238, and R302 each bind IMP. The Proton donor role is filled by H41. Residue T298–R304 participates in substrate binding. GTP is bound by residues R304, K330–D332, and S412–G414.

The protein belongs to the adenylosuccinate synthetase family. As to quaternary structure, homodimer. It depends on Mg(2+) as a cofactor.

Its subcellular location is the cytoplasm. It catalyses the reaction IMP + L-aspartate + GTP = N(6)-(1,2-dicarboxyethyl)-AMP + GDP + phosphate + 2 H(+). It functions in the pathway purine metabolism; AMP biosynthesis via de novo pathway; AMP from IMP: step 1/2. In terms of biological role, plays an important role in the de novo pathway of purine nucleotide biosynthesis. Catalyzes the first committed step in the biosynthesis of AMP from IMP. This Crocosphaera subtropica (strain ATCC 51142 / BH68) (Cyanothece sp. (strain ATCC 51142)) protein is Adenylosuccinate synthetase.